Here is a 624-residue protein sequence, read N- to C-terminus: Chaperone protein HtpG (624 aa).

An a; substrate-binding region spans residues 1–336 (MKGQETRGFQ…SSDLPLNVSR (336 aa)). The interval 337–552 (EILQDSTVTR…ADEMSTQMAK (216 aa)) is b. Residues 553 to 624 (LFAAAGQKVP…IRRMNQLLVS (72 aa)) are c.

Belongs to the heat shock protein 90 family. In terms of assembly, homodimer.

The protein localises to the cytoplasm. Molecular chaperone. Has ATPase activity. The polypeptide is Chaperone protein HtpG (Escherichia coli O1:K1 / APEC).